A 498-amino-acid polypeptide reads, in one-letter code: Acetyl-coenzyme A carboxylase carboxyl transferase subunit beta, chloroplastic (498 aa).

The CoA carboxyltransferase N-terminal domain maps to 228 to 498 (LWVQCEICYG…LNHNLSRTLT (271 aa)). Residues C232, C235, C251, and C254 each contribute to the Zn(2+) site. The C4-type zinc finger occupies 232-254 (CEICYGLNYKKFFKSKMNICEQC).

The protein belongs to the AccD/PCCB family. Acetyl-CoA carboxylase is a heterohexamer composed of biotin carboxyl carrier protein, biotin carboxylase and 2 subunits each of ACCase subunit alpha and ACCase plastid-coded subunit beta (accD). It depends on Zn(2+) as a cofactor.

It localises to the plastid. Its subcellular location is the chloroplast stroma. The catalysed reaction is N(6)-carboxybiotinyl-L-lysyl-[protein] + acetyl-CoA = N(6)-biotinyl-L-lysyl-[protein] + malonyl-CoA. Its pathway is lipid metabolism; malonyl-CoA biosynthesis; malonyl-CoA from acetyl-CoA: step 1/1. Functionally, component of the acetyl coenzyme A carboxylase (ACC) complex. Biotin carboxylase (BC) catalyzes the carboxylation of biotin on its carrier protein (BCCP) and then the CO(2) group is transferred by the transcarboxylase to acetyl-CoA to form malonyl-CoA. The protein is Acetyl-coenzyme A carboxylase carboxyl transferase subunit beta, chloroplastic of Populus alba (White poplar).